The chain runs to 226 residues: Chalcone--flavanone isomerase 2-A (226 aa).

Residues threonine 49, asparagine 114, and serine 191 each coordinate substrate.

Belongs to the chalcone isomerase family. In terms of tissue distribution, mostly expressed in flowers, and, to a lower extent, in roots, shoots, and seeds.

It catalyses the reaction a chalcone = a flavanone.. Its pathway is secondary metabolite biosynthesis; flavonoid biosynthesis. Catalyzes the intramolecular cyclization of bicyclic chalcones into tricyclic (S)-flavanones. Responsible for the isomerization of 4,2',4',6'-tetrahydroxychalcone (also termed chalcone) into naringenin. This Glycine max (Soybean) protein is Chalcone--flavanone isomerase 2-A (CHI2-A).